The primary structure comprises 538 residues: Phospho-2-dehydro-3-deoxyheptonate aldolase 1, chloroplastic (538 aa).

The N-terminal 74 residues, 1–74 (MALSSTSTTN…KPSKSSPPAA (74 aa)), are a transit peptide targeting the chloroplast. Residues 55–82 (DSNKIPIVSDKPSKSSPPAATATTAPAP) form a disordered region. Residues 68 to 82 (KSSPPAATATTAPAP) are compositionally biased toward low complexity. Blocked amino end (Thr) is present on T75.

It belongs to the class-II DAHP synthase family.

The protein localises to the plastid. It is found in the chloroplast. It carries out the reaction D-erythrose 4-phosphate + phosphoenolpyruvate + H2O = 7-phospho-2-dehydro-3-deoxy-D-arabino-heptonate + phosphate. It participates in metabolic intermediate biosynthesis; chorismate biosynthesis; chorismate from D-erythrose 4-phosphate and phosphoenolpyruvate: step 1/7. Its activity is regulated as follows. Activation by tryptophan (a hysteretic factor). This is Phospho-2-dehydro-3-deoxyheptonate aldolase 1, chloroplastic (SHKA) from Solanum tuberosum (Potato).